The following is a 489-amino-acid chain: MQGRSLPFRVATLVTGLLECLGFAGVLFGWTSLVFVFKKQHYFEELCELDAGSLGNATGLDECRARDERFSLIFTLASFTINFMTFPTGYIFDRFKTTVARLIAIFLYTSATLTIAFTSADSAVLLFLAMPMLAVGGILFLITNLQIGNLFGKHRSTIITMYNGAFDSSSAVFLIIKLLYEQGVTIKASFLFISVCSAWHVGRTLLLMPRGHIPYPLPANYHYGLCSRDSPPEEDKKEAESEKLELQSKEFLSPKKETPGQQQAPGSFWSHTFSPRFAWHVVWLSVIQLWHYLFIGTLNSLLNNLASRDSAIVSTYTNAFAVTQFFGVLCAPWNGLLMDRLKHKYQEEAKRTGAVAKAAALRSVVPSLTLTSLLSLGFAVCASIPVLPLQYATFILQVVSRSFLYGCNAAFLTLAFPSEHFGKLFGLVMALSAVVSLLQFPLFTLIKGPLQNDPLYVNLMLVLLTLLTFIHPFLVNRECQRKESPREVA.

The helical transmembrane segment at L17–F37 threads the bilayer. N56 is a glycosylation site (N-linked (GlcNAc...) asparagine). 4 consecutive transmembrane segments (helical) span residues L72–F92, L102–S122, A123–T143, and I158–Y180. S253 carries the post-translational modification Phosphoserine. A Phosphothreonine modification is found at T258. 6 helical membrane-spanning segments follow: residues F277–T297, N318–M338, A358–V380, S402–G422, G426–I446, and L455–V475.

Belongs to the SLC43A transporter (TC 2.A.1.44) family.

Its subcellular location is the basolateral cell membrane. The catalysed reaction is adenine(out) = adenine(in). It carries out the reaction guanine(out) = guanine(in). It catalyses the reaction hypoxanthine(out) = hypoxanthine(in). In terms of biological role, sodium-independent purine-selective nucleobase transporter which mediates the equilibrative transport of extracellular purine nucleobases such as adenine, guanine and hypoxanthine. May regulate fatty acid (FA) transport in adipocytes, acting as a positive regulator of FA efflux and as a negative regulator of FA uptake. The polypeptide is Equilibrative nucleobase transporter 1 (SLC43A3) (Bos taurus (Bovine)).